The sequence spans 86 residues: UPF0297 protein SSP1144 (86 aa).

The protein belongs to the UPF0297 family.

This Staphylococcus saprophyticus subsp. saprophyticus (strain ATCC 15305 / DSM 20229 / NCIMB 8711 / NCTC 7292 / S-41) protein is UPF0297 protein SSP1144.